A 1181-amino-acid chain; its full sequence is HEAT repeat-containing protein 6 (1181 aa).

The HEAT 1 repeat unit spans residues 159–198; it reads PELLGNTGLLMKLSDLAQSDPEVRRAAVHCMANLCLSVPG. Disordered stretches follow at residues 292 to 347 and 371 to 390; these read QYDG…PVTG and LDGS…SSSS. Residues 300 to 312 show a composition bias toward polar residues; that stretch reads KPQQSESSASRPT. The segment covering 313–325 has biased composition (basic residues); sequence LNKKKKSKVKPKK. Phosphoserine occurs at positions 336 and 337. Phosphoserine is present on residues Ser-399 and Ser-402. HEAT repeat units lie at residues 452–490, 515–552, and 558–595; these read ELGS…GSKQ, SIRE…NAPY, and SLLT…THAP. The segment at 613–646 is disordered; sequence NSNSATPHLSPPDWWKKAPAGPSLEETSVSSPKG. Thr-618 carries the phosphothreonine modification. A compositionally biased stretch (polar residues) spans 637 to 646; sequence EETSVSSPKG. At Ser-643 the chain carries Phosphoserine.

As to expression, amplified in breast cancer cell lines MCF-7 and BT-474.

In terms of biological role, amplification-dependent oncogene. This is HEAT repeat-containing protein 6 (HEATR6) from Homo sapiens (Human).